A 415-amino-acid chain; its full sequence is Interleukin-5 receptor subunit alpha (415 aa).

The N-terminal stretch at 1 to 17 (MVPVLLILVGALATLQA) is a signal peptide. The Extracellular portion of the chain corresponds to 18–339 (DLLNHKKFLL…KERKSLVEWH (322 aa)). A Fibronectin type-III 1 domain is found at 29–120 (PPVNFTIKAT…VSAELKAPPG (92 aa)). N32 and N128 each carry an N-linked (GlcNAc...) asparagine glycan. Disulfide bonds link C131-C152 and C179-C193. N213 and N241 each carry an N-linked (GlcNAc...) asparagine glycan. The Fibronectin type-III 2 domain maps to 238 to 331 (PPRNVTVEIE…WSQPIYVGKE (94 aa)). Cysteines 266 and 313 form a disulfide. A WSXWS motif motif is present at residues 319–323 (WGEWS). A helical transmembrane segment spans residues 340-361 (LIVLPTAACFVLLIFSLICRVC). Topologically, residues 362-415 (HLWTRLFPPVPAPKSNIKDLPVVTEYEKPSNETKIEVVHCVEEVGFEVMGNSTF) are cytoplasmic. A Box 1 motif motif is present at residues 367-375 (LFPPVPAPK).

As to quaternary structure, interacts with IL5. Interacts with CSF2RB. Interacts with JAK2. Interacts with SDCBP. Expressed on eosinophils and basophils. Also on B-cells.

It is found in the membrane. Cell surface receptor that plays an important role in the survival, differentiation, and chemotaxis of eosinophils. Acts by forming a heterodimeric receptor with CSF2RB subunit and subsequently binding to interleukin-5. In unstimulated conditions, interacts constitutively with JAK2. Heterodimeric receptor activation leads to JAK2 stimulation and subsequent activation of the JAK-STAT pathway. In Mus musculus (Mouse), this protein is Interleukin-5 receptor subunit alpha (Il5ra).